The chain runs to 1070 residues: DNA-directed RNA polymerase subunit beta (1070 aa).

Belongs to the RNA polymerase beta chain family. In terms of assembly, in plastids the minimal PEP RNA polymerase catalytic core is composed of four subunits: alpha, beta, beta', and beta''. When a (nuclear-encoded) sigma factor is associated with the core the holoenzyme is formed, which can initiate transcription.

It is found in the plastid. Its subcellular location is the chloroplast. The enzyme catalyses RNA(n) + a ribonucleoside 5'-triphosphate = RNA(n+1) + diphosphate. In terms of biological role, DNA-dependent RNA polymerase catalyzes the transcription of DNA into RNA using the four ribonucleoside triphosphates as substrates. The protein is DNA-directed RNA polymerase subunit beta of Nicotiana sylvestris (Wood tobacco).